A 184-amino-acid polypeptide reads, in one-letter code: C-phycoerythrin class 1 subunit beta (184 aa).

2 residues coordinate (2R,3E)-phycoerythrobilin: C50 and C61. N72 bears the N4-methylasparagine mark. Residues C82 and C165 each contribute to the (2R,3E)-phycoerythrobilin site.

Belongs to the phycobiliprotein family. Heterodimer of an alpha and a beta chain. Post-translationally, contains three covalently linked bilin chromophores.

The protein resides in the cellular thylakoid membrane. Light-harvesting photosynthetic bile pigment-protein from the phycobiliprotein complex. The protein is C-phycoerythrin class 1 subunit beta (cpeB) of Synechococcus sp. (strain WH7803).